The sequence spans 129 residues: Large ribosomal subunit protein bL12 (129 aa).

Residues 95–123 (MVESTPKSIKEGVSKEDAEEAKKSLEDAG) show a composition bias toward basic and acidic residues. Positions 95–129 (MVESTPKSIKEGVSKEDAEEAKKSLEDAGGKASLK) are disordered.

This sequence belongs to the bacterial ribosomal protein bL12 family. In terms of assembly, homodimer. Part of the ribosomal stalk of the 50S ribosomal subunit. Forms a multimeric L10(L12)X complex, where L10 forms an elongated spine to which 2 to 4 L12 dimers bind in a sequential fashion. Binds GTP-bound translation factors.

Its function is as follows. Forms part of the ribosomal stalk which helps the ribosome interact with GTP-bound translation factors. Is thus essential for accurate translation. This Acaryochloris marina (strain MBIC 11017) protein is Large ribosomal subunit protein bL12.